Reading from the N-terminus, the 120-residue chain is Large ribosomal subunit protein uL14 (120 aa).

It belongs to the universal ribosomal protein uL14 family. Part of the 50S ribosomal subunit. Forms a cluster with proteins L3 and L19. In the 70S ribosome, L14 and L19 interact and together make contacts with the 16S rRNA in bridges B5 and B8.

Functionally, binds to 23S rRNA. Forms part of two intersubunit bridges in the 70S ribosome. The polypeptide is Large ribosomal subunit protein uL14 (Phytoplasma australiense).